A 362-amino-acid chain; its full sequence is Abnormal cell migration protein 13 (362 aa).

The N-terminal stretch at 1–20 is a signal peptide; sequence MTKLLIALILFSICWKPYSA. The Extracellular segment spans residues 21–237; sequence EPIASFFDGL…ELDPLTTVSG (217 aa). Cystine bridges form between cysteine 36–cysteine 68 and cysteine 98–cysteine 136. Residues 36–175 form the CUB domain; the sequence is CKARLDRRLT…KGFKLHWGSF (140 aa). A glycan (N-linked (GlcNAc...) asparagine) is linked at asparagine 63. N-linked (GlcNAc...) asparagine glycans are attached at residues asparagine 145 and asparagine 161. Residues 182 to 225 enclose the LDL-receptor class A domain; it reads NCVTGEFSCGNGECIPIESACDRFADCSNGEDLIHSRQMAANCQ. Disulfide bonds link cysteine 183–cysteine 195, cysteine 190–cysteine 208, and cysteine 202–cysteine 224. Residues 238-258 traverse the membrane as a helical segment; the sequence is VFVLLFSATIILSLCGFIMFV. Residues 259-362 are Cytoplasmic-facing; sequence CCLCKCLKST…VRNDVHRNLL (104 aa). The segment at 275–311 is disordered; it reads SSHTTTTTATDYKPDPPQFYPPSPPKMPPPSAASSYT. Residues 289–305 are compositionally biased toward pro residues; it reads DPPQFYPPSPPKMPPPS.

In terms of assembly, interacts with abl-1 (via SH2 and SH3 domains); the interaction is direct. Interacts with sem-5; the interaction is direct. Expressed in pharyngeal-intestinal valve cells and ventral cord neurons.

The protein localises to the cell membrane. Its subcellular location is the perikaryon. The protein resides in the cell projection. It localises to the axon. It is found in the dendrite. In terms of biological role, probable receptor that acts as an upstream signaling protein to promote the guidance, migration and positioning of the right Q neuroblast (QR) and its descendants along the anteroposterior body axis, and also the anterior migration of BDU interneurons during larval development. Associates with and recruits the downstream components tyrosine kinase abl-1 and the tyrosine kinase adapter protein sem-5 to the leading edge of migrating Q neuroblasts and their descendants to activate signaling through the two parallel wve-1 and wsp-1 pathways, respectively, and direct migration along the anteroposterior body axis. Involved in cytoskeleton dynamics regulating the organization of the actin cytoskeleton at the leading edge of migrating cells to ensure correct Q cell polarity and promote migration. Role in cytoskeleton organization may be by activation of the wve-1 and wsp-1 pathways which recruit the Arp2/3 complex to the leading edge of migrating cells. Plays a role in regulating the asymmetric distribution of the actin cytoskeleton-binding protein cor-1 in Q neuroblasts which is required for the anterior migration of QR neuroblasts. The chain is Abnormal cell migration protein 13 from Caenorhabditis elegans.